We begin with the raw amino-acid sequence, 397 residues long: Phosphoglycerate transport regulatory protein PgtC (397 aa).

Residues Met-1–Ala-24 form the signal peptide. The chain crosses the membrane as a helical span at residues Thr-102–Arg-117.

The protein resides in the cell membrane. Its function is as follows. Required for pgtP expression, it may act jointly with the PgtA/PgtB signaling proteins. This is Phosphoglycerate transport regulatory protein PgtC (pgtC) from Salmonella typhi.